The sequence spans 80 residues: Translation initiation factor IF-1, chloroplastic (80 aa).

In terms of domain architecture, S1-like spans 1-74 (MKEQKWIHEG…TRGRIIYRLR (74 aa)).

It belongs to the IF-1 family. As to quaternary structure, component of the 30S ribosomal translation pre-initiation complex which assembles on the 30S ribosome in the order IF-2 and IF-3, IF-1 and N-formylmethionyl-tRNA(fMet); mRNA recruitment can occur at any time during PIC assembly.

The protein resides in the plastid. Its subcellular location is the chloroplast. In terms of biological role, one of the essential components for the initiation of protein synthesis. Stabilizes the binding of IF-2 and IF-3 on the 30S subunit to which N-formylmethionyl-tRNA(fMet) subsequently binds. Helps modulate mRNA selection, yielding the 30S pre-initiation complex (PIC). Upon addition of the 50S ribosomal subunit IF-1, IF-2 and IF-3 are released leaving the mature 70S translation initiation complex. The sequence is that of Translation initiation factor IF-1, chloroplastic from Illicium parviflorum (Yellow anise tree).